Reading from the N-terminus, the 126-residue chain is Protein ApaG (126 aa).

In terms of domain architecture, ApaG spans 2–126 (SFPIDSIKIK…FRLAMPGVMQ (125 aa)).

This Shewanella denitrificans (strain OS217 / ATCC BAA-1090 / DSM 15013) protein is Protein ApaG.